We begin with the raw amino-acid sequence, 327 residues long: E3 ubiquitin-protein ligase ZNRF4 (327 aa).

Positions 1 to 28 (MARFAWTRVAPVALVTFWLVLSLSPTDA) are cleaved as a signal peptide. The Lumenal portion of the chain corresponds to 29–150 (QVNLSSVDFL…EPCPDPECHP (122 aa)). Residue N31 is glycosylated (N-linked (GlcNAc...) asparagine). A helical membrane pass occupies residues 151-171 (VVVASWALARALALAASTLFV). Residues 172 to 327 (LRQLWPWVRG…AQSEATSELS (156 aa)) are Cytoplasmic-facing. An RING-type; atypical zinc finger spans residues 209 to 252 (CAICLDDYEEGERLKILPCAHAYHCRCIDPWFSRAAQRSCPLCK). Residues 256 to 265 (ASTHDGSTDG) are compositionally biased toward polar residues. The tract at residues 256 to 279 (ASTHDGSTDGSVGGEEPPLPGHRP) is disordered.

In terms of assembly, interacts with CANX. Expressed exclusively in spermatids (at protein level).

The protein localises to the endoplasmic reticulum membrane. It carries out the reaction S-ubiquitinyl-[E2 ubiquitin-conjugating enzyme]-L-cysteine + [acceptor protein]-L-lysine = [E2 ubiquitin-conjugating enzyme]-L-cysteine + N(6)-ubiquitinyl-[acceptor protein]-L-lysine.. The protein operates within protein modification; protein ubiquitination. Its function is as follows. E3 ubiquitin-protein ligase that acts as a negative regulator of NOD2 signaling by mediating ubiquitination and degradation of RIPK2. Also catalyzes ubiquitination and proteasomal degradation of CANX within the endoplasmic reticulum. Could have a role in spermatogenesis. In Mus musculus (Mouse), this protein is E3 ubiquitin-protein ligase ZNRF4.